The chain runs to 973 residues: Translation initiation factor IF-2 (973 aa).

The span at 97–135 (GHIDLDGGQHKKQQEEPKAKEEPKVKEEPKVKEEPKVKE) shows a compositional bias: basic and acidic residues. Disordered regions lie at residues 97 to 343 (GHID…EDVQ) and 353 to 372 (LTNKNNKNNKGAKYRRDKRD). Residues 136–155 (APAAPAAQAPVKPAQPAQAP) are compositionally biased toward low complexity. Composition is skewed to basic and acidic residues over residues 156 to 175 (TEKKEEKVIVVEVEKEKTVE), 183 to 204 (PKVESVKPEQEVEKTEEKDDNL), 212 to 224 (LESKIKVTGKIDL), and 237 to 250 (TKEEKRKERDEKQK). Low complexity predominate over residues 252–266 (NNNRPGNNSNGPGAP). Composition is skewed to basic and acidic residues over residues 315 to 326 (PNRDDRPNNDRK) and 333 to 343 (VKAEVSEEDVQ). The tr-type G domain occupies 472–642 (ARPPIVTVMG…LLEADLLDLK (171 aa)). Positions 481-488 (GHVDHGKT) are G1. GTP is bound at residue 481–488 (GHVDHGKT). Positions 506-510 (GITQH) are G2. Residues 528-531 (DTPG) are G3. Residues 528–532 (DTPGH) and 582–585 (NKID) contribute to the GTP site. The G4 stretch occupies residues 582–585 (NKID). Residues 618-620 (SAK) form a G5 region.

The protein belongs to the TRAFAC class translation factor GTPase superfamily. Classic translation factor GTPase family. IF-2 subfamily.

Its subcellular location is the cytoplasm. Functionally, one of the essential components for the initiation of protein synthesis. Protects formylmethionyl-tRNA from spontaneous hydrolysis and promotes its binding to the 30S ribosomal subunits. Also involved in the hydrolysis of GTP during the formation of the 70S ribosomal complex. The protein is Translation initiation factor IF-2 of Parabacteroides distasonis (strain ATCC 8503 / DSM 20701 / CIP 104284 / JCM 5825 / NCTC 11152).